The primary structure comprises 346 residues: HLA class I histocompatibility antigen, alpha chain F (346 aa).

Residues 1 to 21 (MAPRSLLLLLSGALALTDTWA) form the signal peptide. An alpha-1 region spans residues 22-111 (GSHSLRYFST…LLRRYNQSEA (90 aa)). Over 22-305 (GSHSLRYFST…EQSPQPTIPI (284 aa)) the chain is Extracellular. A peptide antigen contacts are provided by asparagine 91 and arginine 105. N-linked (GlcNAc...) asparagine glycosylation occurs at asparagine 107. Positions 112-203 (GSHTLQGMNG…ENGKETLQRA (92 aa)) are alpha-2. 2 cysteine pairs are disulfide-bonded: cysteine 122/cysteine 185 and cysteine 224/cysteine 280. A peptide antigen-binding residues include threonine 164, tyrosine 168, and glutamate 176. The segment at 204–295 (DPPKAHVAHH…GLPQPLILRW (92 aa)) is alpha-3. Residues 206–296 (PKAHVAHHPI…LPQPLILRWE (91 aa)) enclose the Ig-like C1-type domain. Residues 296–305 (EQSPQPTIPI) form a connecting peptide region. A helical membrane pass occupies residues 306–329 (VGIVAGLVVLGAVVTGAVVAAVMW). The Cytoplasmic segment spans residues 330–346 (RKKSSDRNRGSYSQAAV). A Sorting signal sequence; Golgi-retention signal; ER-retention signal motif is present at residues 336-338 (RNR).

It belongs to the MHC class I family. In terms of assembly, forms a heterotrimer with B2M and a self-peptide. Binds a diverse number of peptides ranging from 7 to more than 30 amino acids. Peptide-bound HLA-F-B2M interacts with LILRB1 and LILRB2 but not with KIR3DS1 or KIR3DL2; this interaction is direct. The OC form interacts with KIR3DS1, KIR2DS4 and KIR3DL2; this interaction is direct. Interacts with TAP1-TAP2 complex and CALR; this interaction is required for appropriate folding and peptide loading. Interacts with the coat protein complex II and 14-3-3 proteins; these interactions likely control the anterograde ER-to-Golgi transport of HLA-F. HLA-F-B2M complex interacts with the heavy chain of other MHC class I molecules including HLA-A and HLA-E; this interaction may regulate the intracellular trafficking and the stability of peptide-free MHC class I OCs. Post-translationally, N-glycosylated. Expressed in resting B cells (at protein level). Expressed in secondary lymphoid organs rich in B and T cells such as the tonsils, spleen, and thymus (at protein level). Expressed in the endothelial cells of the tonsils. Expressed on activated lymphoid cells including B cells, NK cells, CD4+ T cells and memory T cells (at protein level). Expressed in motor neurons of spinal cord.

It localises to the cell membrane. Its subcellular location is the early endosome membrane. The protein localises to the lysosome membrane. Its function is as follows. Non-classical major histocompatibility class Ib molecule postulated to play a role in immune surveillance, immune tolerance and inflammation. Functions in two forms, as a heterotrimeric complex with B2M/beta-2 microglobulin and a peptide (peptide-bound HLA-F-B2M) and as an open conformer (OC) devoid of peptide and B2M (peptide-free OC). In complex with B2M, presents non-canonical self-peptides carrying post-translational modifications, particularly phosphorylated self-peptides. Peptide-bound HLA-F-B2M acts as a ligand for LILRB1 inhibitory receptor, a major player in maternal-fetal tolerance. Peptide-free OC acts as a ligand for KIR3DS1 and KIR3DL2 receptors. Upon interaction with activating KIR3DS1 receptor on NK cells, triggers NK cell degranulation and anti-viral cytokine production. Through interaction with KIR3DL2 receptor, inhibits NK and T cell effector functions. May interact with other MHC class I OCs to cross-present exogenous viral, tumor or minor histompatibility antigens to cytotoxic CD8+ T cells, triggering effector and memory responses. May play a role in inflammatory responses in the peripheral nervous system. Through interaction with KIR3DL2, may protect motor neurons from astrocyte-induced toxicity. This chain is HLA class I histocompatibility antigen, alpha chain F, found in Homo sapiens (Human).